Reading from the N-terminus, the 321-residue chain is Tet-like dioxygenase 1 (321 aa).

The Fe2OG dioxygenase domain occupies 198–298; it reads DSYYALNNCL…RIGLVYFAHK (101 aa). Positions 214 and 224 each coordinate 2-oxoglutarate. Residues H229 and D231 each contribute to the Fe cation site. Position 242 (Y242) interacts with 2-oxoglutarate. H279 is a Fe cation binding site. R289 lines the 2-oxoglutarate pocket. Position 310 (Q310) interacts with substrate.

The cofactor is Fe(2+).

It catalyses the reaction a 5-methyl-2'-deoxycytidine in DNA + 2-oxoglutarate + O2 = a 5-hydroxymethyl-2'-deoxycytidine in DNA + succinate + CO2. The enzyme catalyses a 5-hydroxymethyl-2'-deoxycytidine in DNA + 2-oxoglutarate + O2 = a 5-formyl-2'-deoxycytidine in DNA + succinate + CO2 + H2O. It carries out the reaction a 5-formyl-2'-deoxycytidine in DNA + 2-oxoglutarate + O2 = a 5-carboxyl-2'-deoxycytidine in DNA + succinate + CO2 + H(+). Dioxygenase that catalyzes the conversion of the modified genomic base 5-methylcytosine (5mC) into 5-hydroxymethylcytosine (5hmC), and thereby plays a role in active DNA demethylation. Also mediates subsequent conversion of 5hmC into 5-formylcytosine (5fC), and conversion of 5fC to 5-carboxylcytosine (5caC). In Naegleria gruberi (Amoeba), this protein is Tet-like dioxygenase 1.